The primary structure comprises 308 residues: N-acetylmuramic acid 6-phosphate etherase (308 aa).

Residues 59–222 form the SIS domain; sequence TAERLRHGGR…STGVMVKLGK (164 aa). Residue Glu87 is the Proton donor of the active site. Glu118 is an active-site residue.

The protein belongs to the GCKR-like family. MurNAc-6-P etherase subfamily. Homodimer.

The enzyme catalyses N-acetyl-D-muramate 6-phosphate + H2O = N-acetyl-D-glucosamine 6-phosphate + (R)-lactate. Its pathway is amino-sugar metabolism; N-acetylmuramate degradation. Its function is as follows. Specifically catalyzes the cleavage of the D-lactyl ether substituent of MurNAc 6-phosphate, producing GlcNAc 6-phosphate and D-lactate. In Nostoc punctiforme (strain ATCC 29133 / PCC 73102), this protein is N-acetylmuramic acid 6-phosphate etherase.